The chain runs to 130 residues: T-cell receptor alpha chain V region PHDS58 (130 aa).

An N-terminal signal peptide occupies residues 1-20 (MLLALLPVLGIHFVLRDAQA). The v segment stretch occupies residues 21–114 (QSVTQPDARV…SAVYFCAVSG (94 aa)). An N-linked (GlcNAc...) asparagine glycan is attached at N90. The interval 115–130 (FASALTFGSGTKVIVL) is j segment.

The sequence is that of T-cell receptor alpha chain V region PHDS58 from Mus musculus (Mouse).